Consider the following 400-residue polypeptide: Probable splicing factor YJU2B (400 aa).

Residues 1–26 are disordered; that stretch reads MGERKGVNKYYPPDFNPEKHGSLNRY. A Phosphoserine modification is found at Ser40. A coiled-coil region spans residues 182–214; the sequence is LNSMLRKRFREKKKAMQEEEERDQALQAKASLA. Positions 255–400 are disordered; it reads WFPSTPGASA…VADYSGSESE (146 aa). The segment covering 283-292 has biased composition (polar residues); the sequence is RRATPTSSPV. Ser310 carries the phosphoserine modification. Polar residues predominate over residues 327 to 341; sequence EGTNQNRPVSPQDCS. Positions 364 to 380 are enriched in pro residues; the sequence is PQPPPDTSPEAPNPQDT.

It belongs to the CWC16 family.

Its subcellular location is the nucleus. Functionally, may be involved in mRNA splicing. The polypeptide is Probable splicing factor YJU2B (YJU2B) (Bos taurus (Bovine)).